A 191-amino-acid polypeptide reads, in one-letter code: Pyridoxal 5'-phosphate synthase subunit PdxT (191 aa).

Residue 48 to 50 coordinates L-glutamine; it reads GES. Cysteine 81 serves as the catalytic Nucleophile. L-glutamine contacts are provided by residues arginine 109 and 136-137; that span reads IR. Residues histidine 172 and glutamate 174 each act as charge relay system in the active site.

The protein belongs to the glutaminase PdxT/SNO family. In the presence of PdxS, forms a dodecamer of heterodimers. Only shows activity in the heterodimer.

It carries out the reaction aldehydo-D-ribose 5-phosphate + D-glyceraldehyde 3-phosphate + L-glutamine = pyridoxal 5'-phosphate + L-glutamate + phosphate + 3 H2O + H(+). The enzyme catalyses L-glutamine + H2O = L-glutamate + NH4(+). It participates in cofactor biosynthesis; pyridoxal 5'-phosphate biosynthesis. In terms of biological role, catalyzes the hydrolysis of glutamine to glutamate and ammonia as part of the biosynthesis of pyridoxal 5'-phosphate. The resulting ammonia molecule is channeled to the active site of PdxS. The sequence is that of Pyridoxal 5'-phosphate synthase subunit PdxT from Thermus thermophilus (strain ATCC BAA-163 / DSM 7039 / HB27).